The primary structure comprises 376 residues: Protein RecA (376 aa).

78–85 (GPESSGKT) is an ATP binding site. The interval 355–376 (PVELVPNVDFDDEADTEADAED) is disordered. Residues 363-376 (DFDDEADTEADAED) show a composition bias toward acidic residues.

The protein belongs to the RecA family.

The protein localises to the cytoplasm. Functionally, can catalyze the hydrolysis of ATP in the presence of single-stranded DNA, the ATP-dependent uptake of single-stranded DNA by duplex DNA, and the ATP-dependent hybridization of homologous single-stranded DNAs. It interacts with LexA causing its activation and leading to its autocatalytic cleavage. The protein is Protein RecA of Corynebacterium glutamicum (strain R).